Here is a 409-residue protein sequence, read N- to C-terminus: U-box domain-containing protein 28 (409 aa).

Positions 10 to 84 (TVPCFFKCPI…DHWSDSINRR (75 aa)) constitute a U-box domain. ARM repeat units lie at residues 178–218 (RLSN…FIAV), 219–261 (DAES…AIAS), and 263–304 (KRVK…AISS).

It catalyses the reaction S-ubiquitinyl-[E2 ubiquitin-conjugating enzyme]-L-cysteine + [acceptor protein]-L-lysine = [E2 ubiquitin-conjugating enzyme]-L-cysteine + N(6)-ubiquitinyl-[acceptor protein]-L-lysine.. Its pathway is protein modification; protein ubiquitination. Functionally, functions as an E3 ubiquitin ligase. The chain is U-box domain-containing protein 28 (PUB28) from Arabidopsis thaliana (Mouse-ear cress).